Consider the following 828-residue polypeptide: Neurotrophin receptor-interacting factor 1 (828 aa).

In terms of domain architecture, KRAB 1 spans Val-14–Pro-85. Lys-15 is covalently cross-linked (Glycyl lysine isopeptide (Lys-Gly) (interchain with G-Cter in ubiquitin)). The SCAN box domain occupies Arg-158–Ser-240. In terms of domain architecture, KRAB 2 spans Val-280–Glu-370. Disordered stretches follow at residues Arg-328–Thr-355, Asn-377–Thr-490, and Gln-575–Ser-611. Polar residues predominate over residues Pro-345–Thr-355. Positions Glu-384 to Glu-394 are enriched in basic and acidic residues. The span at Lys-418 to Arg-433 shows a compositional bias: basic residues. The span at Arg-458–Glu-478 shows a compositional bias: polar residues. Residues Ser-589–Gly-599 show a composition bias toward basic residues. Positions Ser-600 to Ser-611 are enriched in basic and acidic residues. 5 consecutive C2H2-type zinc fingers follow at residues Cys-684–His-706, Tyr-712–His-734, Phe-740–His-762, Tyr-768–His-790, and Tyr-796–His-818.

The protein belongs to the krueppel C2H2-type zinc-finger protein family. Interacts with NGFR/p75(NTR). Interacts (via KRAB 1 domain) with TRAF6. Interacts (when ubiquitinated at Lys-15) with SQSTM1/p62. Ubiquitinated by TRAF6 at Lys-15 through 'Lys-63'-linked polyubiquitination. 'Lys-63'-linked polyubiquitination occurs in response to NGFR/p75(NTR) cleavage by gamma-secretase and promotes binding with the ICD cleavage product of NGFR/p75(NTR), followed by translocation into the nucleus and subsequent apoptosis. In terms of tissue distribution, ubiquitously expressed at low level. Expressed at higher level in testis.

It is found in the cytoplasm. It localises to the nucleus. Transcription regulator involved in NGFR/p75(NTR)-mediated apoptosis. Essential component of the NGFR/p75(NTR) apoptotic pathway: upon ligand-binding and subsequent cleavage of NGFR/p75(NTR), binds to the intracellular domain (ICD) cleavage product of NGFR/p75(NTR), translocates to the nucleus and induces apoptosis, possibly by regulating expression of key regulators of apoptosis. Induces NGFR/p75(NTR)-mediated apoptosis in retina and sympathetic neurons. May also regulate expression of neuronal cholesterol biosynthesis genes. Probably acts as a transcription repressor: specifically binds to the 3'-end of zinc-finger coding genes and recruiting chromatin-modifying proteins such as SETDB1 and TRIM28/KAP1, leading to transcription repression. This chain is Neurotrophin receptor-interacting factor 1 (Nrif1), found in Mus musculus (Mouse).